A 49-amino-acid polypeptide reads, in one-letter code: Beta-toxin Rc1 (49 aa).

3 disulfides stabilise this stretch: cysteine 15–cysteine 31, cysteine 22–cysteine 40, and cysteine 26–cysteine 42.

It belongs to the long (4 C-C) scorpion toxin superfamily. Sodium channel inhibitor family. Beta subfamily. In terms of tissue distribution, expressed by the venom gland.

Its subcellular location is the secreted. Its function is as follows. Beta toxins bind voltage-independently at site-4 of sodium channels (Nav) and shift the voltage of activation toward more negative potentials thereby affecting sodium channel activation and promoting spontaneous and repetitive firing. This toxin acts on X.laevis Nav1.6/SCN8A and insect BgNav1 channels, and also displays a small but significant effect on X.laevis Nav1.4/SCN4A channels. In mice induces nociception (licking and lifting behaviors) during the first 15 minutes after injection, and increases the release of TNF-alpha in J774.1 cells. The chain is Beta-toxin Rc1 from Rhopalurus crassicauda (Scorpion).